The primary structure comprises 123 residues: Holo-[acyl-carrier-protein] synthase (123 aa).

Mg(2+) contacts are provided by D7 and E56.

This sequence belongs to the P-Pant transferase superfamily. AcpS family. Mg(2+) is required as a cofactor.

The protein resides in the cytoplasm. It carries out the reaction apo-[ACP] + CoA = holo-[ACP] + adenosine 3',5'-bisphosphate + H(+). In terms of biological role, transfers the 4'-phosphopantetheine moiety from coenzyme A to a Ser of acyl-carrier-protein. This is Holo-[acyl-carrier-protein] synthase from Carboxydothermus hydrogenoformans (strain ATCC BAA-161 / DSM 6008 / Z-2901).